The primary structure comprises 172 residues: Disulfide bond formation protein B (172 aa).

At 1–11 (MNPFRWSFRAQ) the chain is on the cytoplasmic side. A helical membrane pass occupies residues 12–28 (FLLGFLACAGLLAYAIY). Residues 29-46 (VQLHLGLEPCPLCIFQRI) are Periplasmic-facing. A disulfide bridge links C38 with C41. The helical transmembrane segment at 47-63 (AFAALAVFFLLGALHGP) threads the bilayer. At 64-70 (RAAAGRK) the chain is on the cytoplasmic side. A helical membrane pass occupies residues 71 to 88 (VYGVLSFIAAGVGMGIAA). Residues 89-145 (RHVWVQIRPKDMMSSCGPPLSFLSETMGPFEVFRTVLTGTGDCGNIDWRFLGLSMPM) are Periplasmic-facing. A disulfide bond links C104 and C131. The chain crosses the membrane as a helical span at residues 146–164 (WSMVWFVGLALWALYAGFK). Over 165-172 (VRRSSVHH) the chain is Cytoplasmic.

This sequence belongs to the DsbB family.

It is found in the cell inner membrane. Functionally, required for disulfide bond formation in some periplasmic proteins. Acts by oxidizing the DsbA protein. In Xanthomonas axonopodis pv. citri (strain 306), this protein is Disulfide bond formation protein B.